A 232-amino-acid chain; its full sequence is Putative N-acetylmannosamine-6-phosphate 2-epimerase (232 aa).

The protein belongs to the NanE family.

The catalysed reaction is an N-acyl-D-glucosamine 6-phosphate = an N-acyl-D-mannosamine 6-phosphate. It functions in the pathway amino-sugar metabolism; N-acetylneuraminate degradation; D-fructose 6-phosphate from N-acetylneuraminate: step 3/5. Converts N-acetylmannosamine-6-phosphate (ManNAc-6-P) to N-acetylglucosamine-6-phosphate (GlcNAc-6-P). In Borrelia garinii subsp. bavariensis (strain ATCC BAA-2496 / DSM 23469 / PBi) (Borreliella bavariensis), this protein is Putative N-acetylmannosamine-6-phosphate 2-epimerase.